The following is a 133-amino-acid chain: ATP synthase epsilon chain, chloroplastic (133 aa).

It belongs to the ATPase epsilon chain family. F-type ATPases have 2 components, CF(1) - the catalytic core - and CF(0) - the membrane proton channel. CF(1) has five subunits: alpha(3), beta(3), gamma(1), delta(1), epsilon(1). CF(0) has three main subunits: a, b and c.

The protein resides in the plastid. It localises to the chloroplast thylakoid membrane. Its function is as follows. Produces ATP from ADP in the presence of a proton gradient across the membrane. This chain is ATP synthase epsilon chain, chloroplastic, found in Thalassiosira pseudonana (Marine diatom).